Here is a 566-residue protein sequence, read N- to C-terminus: Putative ankyrin repeat protein RF_0987 (566 aa).

Disordered regions lie at residues 61 to 118 (KKKN…HENS), 276 to 314 (PPVM…SAEI), and 355 to 392 (VNNN…SEST). Residues 78–92 (NQEEPKLASQEHTEA) are compositionally biased toward basic and acidic residues. Polar residues predominate over residues 101–112 (TGNTALPSVTAS). The span at 296 to 308 (TPVTTPSKVVPTT) shows a compositional bias: low complexity. Over residues 365–378 (EKSPPVSSSNVTIQ) the composition is skewed to polar residues. 2 ANK repeats span residues 506–535 (SGET…KIST) and 539–566 (ECQY…KGYQ).

This is Putative ankyrin repeat protein RF_0987 from Rickettsia felis (strain ATCC VR-1525 / URRWXCal2) (Rickettsia azadi).